The sequence spans 119 residues: Protein TusC (119 aa).

This sequence belongs to the DsrF/TusC family. As to quaternary structure, heterohexamer, formed by a dimer of trimers. The hexameric TusBCD complex contains 2 copies each of TusB, TusC and TusD. The TusBCD complex interacts with TusE.

It is found in the cytoplasm. In terms of biological role, part of a sulfur-relay system required for 2-thiolation of 5-methylaminomethyl-2-thiouridine (mnm(5)s(2)U) at tRNA wobble positions. This Shigella dysenteriae serotype 1 (strain Sd197) protein is Protein TusC.